The following is a 230-amino-acid chain: Demethylmenaquinone methyltransferase (230 aa).

S-adenosyl-L-methionine-binding positions include Thr57, Asp77, 101–102 (DI), and Ser118.

Belongs to the class I-like SAM-binding methyltransferase superfamily. MenG/UbiE family.

The enzyme catalyses a 2-demethylmenaquinol + S-adenosyl-L-methionine = a menaquinol + S-adenosyl-L-homocysteine + H(+). Its pathway is quinol/quinone metabolism; menaquinone biosynthesis; menaquinol from 1,4-dihydroxy-2-naphthoate: step 2/2. In terms of biological role, methyltransferase required for the conversion of demethylmenaquinol (DMKH2) to menaquinol (MKH2). The protein is Demethylmenaquinone methyltransferase of Chlamydia felis (strain Fe/C-56) (Chlamydophila felis).